Reading from the N-terminus, the 290-residue chain is Light-independent protochlorophyllide reductase iron-sulfur ATP-binding protein (290 aa).

ATP-binding positions include 10 to 15 and lysine 39; that span reads GIGKST. Residue serine 14 participates in Mg(2+) binding. Cysteine 95 and cysteine 129 together coordinate [4Fe-4S] cluster. ATP is bound at residue 180 to 181; sequence NR.

It belongs to the NifH/BchL/ChlL family. Homodimer. Protochlorophyllide reductase is composed of three subunits; ChlL, ChlN and ChlB. [4Fe-4S] cluster serves as cofactor.

It is found in the plastid. Its subcellular location is the chloroplast. The enzyme catalyses chlorophyllide a + oxidized 2[4Fe-4S]-[ferredoxin] + 2 ADP + 2 phosphate = protochlorophyllide a + reduced 2[4Fe-4S]-[ferredoxin] + 2 ATP + 2 H2O. It functions in the pathway porphyrin-containing compound metabolism; chlorophyll biosynthesis (light-independent). Functionally, component of the dark-operative protochlorophyllide reductase (DPOR) that uses Mg-ATP and reduced ferredoxin to reduce ring D of protochlorophyllide (Pchlide) to form chlorophyllide a (Chlide). This reaction is light-independent. The L component serves as a unique electron donor to the NB-component of the complex, and binds Mg-ATP. The sequence is that of Light-independent protochlorophyllide reductase iron-sulfur ATP-binding protein from Anthoceros angustus (Hornwort).